A 258-amino-acid polypeptide reads, in one-letter code: Hydroxyacylglutathione hydrolase (258 aa).

Zn(2+)-binding residues include histidine 55, histidine 57, aspartate 59, histidine 60, histidine 115, aspartate 132, and histidine 170.

The protein belongs to the metallo-beta-lactamase superfamily. Glyoxalase II family. As to quaternary structure, monomer. Zn(2+) is required as a cofactor.

The enzyme catalyses an S-(2-hydroxyacyl)glutathione + H2O = a 2-hydroxy carboxylate + glutathione + H(+). It functions in the pathway secondary metabolite metabolism; methylglyoxal degradation; (R)-lactate from methylglyoxal: step 2/2. In terms of biological role, thiolesterase that catalyzes the hydrolysis of S-D-lactoyl-glutathione to form glutathione and D-lactic acid. This Shewanella halifaxensis (strain HAW-EB4) protein is Hydroxyacylglutathione hydrolase.